The following is a 293-amino-acid chain: 4-hydroxybenzoate octaprenyltransferase (293 aa).

8 helical membrane-spanning segments follow: residues phenylalanine 41–isoleucine 61, threonine 98–leucine 118, threonine 122–phenylalanine 142, leucine 145–valine 165, glutamate 167–tyrosine 187, isoleucine 218–glutamine 238, tryptophan 241–threonine 261, and alanine 272–tyrosine 292.

The protein belongs to the UbiA prenyltransferase family. It depends on Mg(2+) as a cofactor.

It is found in the cell inner membrane. It carries out the reaction all-trans-octaprenyl diphosphate + 4-hydroxybenzoate = 4-hydroxy-3-(all-trans-octaprenyl)benzoate + diphosphate. Its pathway is cofactor biosynthesis; ubiquinone biosynthesis. Functionally, catalyzes the prenylation of para-hydroxybenzoate (PHB) with an all-trans polyprenyl group. Mediates the second step in the final reaction sequence of ubiquinone-8 (UQ-8) biosynthesis, which is the condensation of the polyisoprenoid side chain with PHB, generating the first membrane-bound Q intermediate 3-octaprenyl-4-hydroxybenzoate. The sequence is that of 4-hydroxybenzoate octaprenyltransferase from Actinobacillus pleuropneumoniae serotype 5b (strain L20).